The sequence spans 309 residues: Polyprenal reductase (309 aa).

The Cytoplasmic portion of the chain corresponds to 1-3; the sequence is MFH. A helical membrane pass occupies residues 4–24; the sequence is ILSIVNIIWLLLALCFGAAFC. At 25–67 the chain is on the lumenal side; that stretch reads LNKFSVKLPNRVEHVFQDFIRYGKTKENIKRASWQLVFDLSKR. The chain crosses the membrane as a helical span at residues 68-88; that stretch reads YFYHFYVVSVMWNGLLLLFSI. The Cytoplasmic segment spans residues 89 to 114; it reads RSVVMSEAFPDWIIDVLGSLTGRSRG. The chain crosses the membrane as a helical span at residues 115 to 135; that stretch reads AWNEIHLSTLLLQVLLWVHTL. Residues 136-150 are Lumenal-facing; the sequence is RRLLECLFVSVFSDG. The helical transmembrane segment at 151-171 threads the bilayer; sequence VINVVQYAFGLSYYIILGLTV. Residues 172–185 are Cytoplasmic-facing; the sequence is LCTNDSLPQSESVS. A helical transmembrane segment spans residues 186 to 206; sequence FFNQLTWYHVVGTLLFFWASF. Residues 207 to 255 lie on the Lumenal side of the membrane; the sequence is LQHQSLSLLAKMRTDSSGKVETLAHKMPCGGWFELVSCPHYLAELLIYA. Residues 256-276 traverse the membrane as a helical segment; sequence AMCVCCGCASLTWWMVVLYVL. The Cytoplasmic portion of the chain corresponds to 277–309; the sequence is CNQALAAQLCHEYYRSKFKTYPHHRKAFIPFVL.

This sequence belongs to the steroid 5-alpha reductase family. Polyprenal reductase subfamily.

It localises to the endoplasmic reticulum membrane. It catalyses the reaction a di-trans,poly-cis-dolichal + NADP(+) = a di-trans,poly-cis-polyprenal + NADPH + H(+). The enzyme catalyses a 3-oxo-5alpha-steroid + NADP(+) = a 3-oxo-Delta(4)-steroid + NADPH + H(+). The catalysed reaction is androst-4-ene-3,17-dione + NADPH + H(+) = 5alpha-androstan-3,17-dione + NADP(+). It carries out the reaction 17beta-hydroxy-5alpha-androstan-3-one + NADP(+) = testosterone + NADPH + H(+). The protein operates within protein modification; protein glycosylation. In terms of biological role, plays a key role in early steps of protein N-linked glycosylation by being involved in the conversion of polyprenol into dolichol. Acts as a polyprenal reductase that mediates the reduction of polyprenal into dolichal in a NADP-dependent mechanism. Dolichols are required for the synthesis of dolichol-linked monosaccharides and the oligosaccharide precursor used for N-glycosylation. Also able to convert testosterone (T) into 5-alpha-dihydrotestosterone (DHT). This Danio rerio (Zebrafish) protein is Polyprenal reductase (srd5a3).